A 402-amino-acid polypeptide reads, in one-letter code: Formate-dependent phosphoribosylglycinamide formyltransferase (402 aa).

Residues 25–26 (EL) and glutamate 85 contribute to the N(1)-(5-phospho-beta-D-ribosyl)glycinamide site. Residues arginine 118, lysine 159, 164-169 (SSGKGQ), 199-202 (EQFV), and glutamate 207 contribute to the ATP site. Residues 123–318 (RLASEELGLP…EFELHAKAVL (196 aa)) enclose the ATP-grasp domain. Mg(2+)-binding residues include glutamate 277 and glutamate 289. N(1)-(5-phospho-beta-D-ribosyl)glycinamide is bound by residues aspartate 296, lysine 365, and 372–373 (RR).

This sequence belongs to the PurK/PurT family. As to quaternary structure, homodimer.

The enzyme catalyses N(1)-(5-phospho-beta-D-ribosyl)glycinamide + formate + ATP = N(2)-formyl-N(1)-(5-phospho-beta-D-ribosyl)glycinamide + ADP + phosphate + H(+). Its pathway is purine metabolism; IMP biosynthesis via de novo pathway; N(2)-formyl-N(1)-(5-phospho-D-ribosyl)glycinamide from N(1)-(5-phospho-D-ribosyl)glycinamide (formate route): step 1/1. In terms of biological role, involved in the de novo purine biosynthesis. Catalyzes the transfer of formate to 5-phospho-ribosyl-glycinamide (GAR), producing 5-phospho-ribosyl-N-formylglycinamide (FGAR). Formate is provided by PurU via hydrolysis of 10-formyl-tetrahydrofolate. In Corynebacterium efficiens (strain DSM 44549 / YS-314 / AJ 12310 / JCM 11189 / NBRC 100395), this protein is Formate-dependent phosphoribosylglycinamide formyltransferase.